A 290-amino-acid polypeptide reads, in one-letter code: 2-dehydro-3-deoxyphosphooctonate aldolase 1 (290 aa).

Ala-2 bears the N-acetylalanine mark.

The protein belongs to the KdsA family. Expressed in shoots.

The protein localises to the cytoplasm. It catalyses the reaction D-arabinose 5-phosphate + phosphoenolpyruvate + H2O = 3-deoxy-alpha-D-manno-2-octulosonate-8-phosphate + phosphate. Its function is as follows. Catalyzes the stereospecific condensation of D-arabinose 5-phosphate and phosphoenolpyruvate to form 3-deoxy-D-manno-octulosonate 8-phosphate (KDO-8-phosphate) and inorganic phosphate. Involved in the biosynthesis of 3-deoxy-D-manno-octulosonate (KDO) which is an indispensable component of rhamnogalacturonan II (RG-II), a structurally complex pectic polysaccharide of the primary cell wall. RG-II is essential for the cell wall integrity of rapidly growing tissues and pollen tube growth and elongation. The protein is 2-dehydro-3-deoxyphosphooctonate aldolase 1 (KDSA1) of Arabidopsis thaliana (Mouse-ear cress).